The following is a 480-amino-acid chain: Carboxy-terminal processing protease CtpB (480 aa).

A signal peptide spans Met1–Ala23. The PDZ domain occupies Ser92–Pro182. The peptide binding stretch occupies residues Gly113 to Ala116. The active-site Nucleophile is the Ser309. Catalysis depends on charge relay system residues Lys334 and Gln338.

This sequence belongs to the peptidase S41A family. As to quaternary structure, homodimer. Post-translationally, is cleaved by SpoIVB in vitro and in vivo but this cleavage does not appear to be necessary for CtpB activation. CtpB can also cleave itself in vivo.

Its subcellular location is the forespore intermembrane space. The catalysed reaction is The enzyme shows specific recognition of a C-terminal tripeptide, Xaa-Yaa-Zaa, in which Xaa is preferably Ala or Leu, Yaa is preferably Ala or Tyr, and Zaa is preferably Ala, but then cleaves at a variable distance from the C-terminus. A typical cleavage is -Ala-Ala-|-Arg-Ala-Ala-Lys-Glu-Asn-Tyr-Ala-Leu-Ala-Ala.. With respect to regulation, activated by peptide binding to the PDZ domain. Involved in the signal transduction pathway leading to the proteolytic activation of the mother cell transcription factor pro-sigma-K during sporulation. The signaling serine protease CtpB triggers pro-sigma-K processing by cleaving the pre-processed regulatory protein SpoIVFA and is necessary for the proper timing of sigma-K activation. The polypeptide is Carboxy-terminal processing protease CtpB (ctpB) (Bacillus subtilis (strain 168)).